The chain runs to 440 residues: Xylose isomerase (440 aa).

Catalysis depends on residues His-100 and Asp-103. Mg(2+)-binding residues include Glu-231, Glu-267, His-270, Asp-295, Asp-306, Asp-308, and Asp-338.

The protein belongs to the xylose isomerase family. As to quaternary structure, homotetramer. Mg(2+) is required as a cofactor.

Its subcellular location is the cytoplasm. The enzyme catalyses alpha-D-xylose = alpha-D-xylulofuranose. This Burkholderia orbicola (strain MC0-3) protein is Xylose isomerase.